A 180-amino-acid polypeptide reads, in one-letter code: Translation initiation factor IF-3 (180 aa).

This sequence belongs to the IF-3 family. Monomer.

It localises to the cytoplasm. Functionally, IF-3 binds to the 30S ribosomal subunit and shifts the equilibrium between 70S ribosomes and their 50S and 30S subunits in favor of the free subunits, thus enhancing the availability of 30S subunits on which protein synthesis initiation begins. This is Translation initiation factor IF-3 from Xylella fastidiosa (strain Temecula1 / ATCC 700964).